Reading from the N-terminus, the 310-residue chain is MFDAKSFIEESVEDIKKQINGRKTIIALSGGVDSSVAAVLTGKAIGDQLLAVYVDTGLMRKNESNEIWNIFKEQMGLNLKIVEAKDLFLSELAGIDDPEQKRKIIGRIFIEVFEKVAKEQGEEILVQGTIAPDWIESEGQIKTHHNIALPSGMVLEVVEPLRDLYKDEVRKLATELGLPEKIAHRQPFPGPGLAVRILGEITEEKLEICKEANFIVSEEIEKTGLQKELWQYFAAVLDTKATGVKGDIRDYNWVVALRFVKSLDAMTAHTPEIPFDLIKRISKRITSEIPNVTRVVLDVTDKPPATIEFE.

In terms of domain architecture, GMPS ATP-PPase spans 2–185; the sequence is FDAKSFIEES…LGLPEKIAHR (184 aa). 29 to 35 contributes to the ATP binding site; it reads SGGVDSS.

In terms of assembly, heterodimer composed of a glutamine amidotransferase subunit (A) and a GMP-binding subunit (B).

It carries out the reaction XMP + L-glutamine + ATP + H2O = GMP + L-glutamate + AMP + diphosphate + 2 H(+). Its pathway is purine metabolism; GMP biosynthesis; GMP from XMP (L-Gln route): step 1/1. Its function is as follows. Catalyzes the synthesis of GMP from XMP. This Methanococcus vannielii (strain ATCC 35089 / DSM 1224 / JCM 13029 / OCM 148 / SB) protein is GMP synthase [glutamine-hydrolyzing] subunit B.